Reading from the N-terminus, the 1494-residue chain is DNA-directed RNA polymerase subunit beta' (1494 aa).

Positions 67, 69, 82, and 85 each coordinate Zn(2+). Residues Asp-499, Asp-501, and Asp-503 each coordinate Mg(2+). Positions 868, 944, 951, and 954 each coordinate Zn(2+).

The protein belongs to the RNA polymerase beta' chain family. As to quaternary structure, the RNAP catalytic core consists of 2 alpha, 1 beta, 1 beta' and 1 omega subunit. When a sigma factor is associated with the core the holoenzyme is formed, which can initiate transcription. Mg(2+) is required as a cofactor. The cofactor is Zn(2+).

The catalysed reaction is RNA(n) + a ribonucleoside 5'-triphosphate = RNA(n+1) + diphosphate. DNA-dependent RNA polymerase catalyzes the transcription of DNA into RNA using the four ribonucleoside triphosphates as substrates. The sequence is that of DNA-directed RNA polymerase subunit beta' from Chlorobaculum parvum (strain DSM 263 / NCIMB 8327) (Chlorobium vibrioforme subsp. thiosulfatophilum).